A 461-amino-acid chain; its full sequence is ATP synthase subunit beta (461 aa).

Residue 151-158 coordinates ATP; that stretch reads GGAGVGKT.

The protein belongs to the ATPase alpha/beta chains family. As to quaternary structure, F-type ATPases have 2 components, CF(1) - the catalytic core - and CF(0) - the membrane proton channel. CF(1) has five subunits: alpha(3), beta(3), gamma(1), delta(1), epsilon(1). CF(0) has three main subunits: a(1), b(2) and c(9-12). The alpha and beta chains form an alternating ring which encloses part of the gamma chain. CF(1) is attached to CF(0) by a central stalk formed by the gamma and epsilon chains, while a peripheral stalk is formed by the delta and b chains.

The protein resides in the cell inner membrane. The catalysed reaction is ATP + H2O + 4 H(+)(in) = ADP + phosphate + 5 H(+)(out). In terms of biological role, produces ATP from ADP in the presence of a proton gradient across the membrane. The catalytic sites are hosted primarily by the beta subunits. The chain is ATP synthase subunit beta from Pseudoalteromonas translucida (strain TAC 125).